A 407-amino-acid chain; its full sequence is Peptidase T (407 aa).

H82 lines the Zn(2+) pocket. D84 is a catalytic residue. D143 serves as a coordination point for Zn(2+). The active-site Proton acceptor is the E177. Positions 178, 200, and 382 each coordinate Zn(2+).

This sequence belongs to the peptidase M20B family. Requires Zn(2+) as cofactor.

Its subcellular location is the cytoplasm. The catalysed reaction is Release of the N-terminal residue from a tripeptide.. Its function is as follows. Cleaves the N-terminal amino acid of tripeptides. The chain is Peptidase T from Streptococcus uberis (strain ATCC BAA-854 / 0140J).